Here is a 35-residue protein sequence, read N- to C-terminus: uncharacterized protein (35 aa).

Residues 10 to 30 (LMITASFFAIFIIIVVSVLLL) form a helical membrane-spanning segment.

It localises to the membrane. This is an uncharacterized protein from Salmonella paratyphi A (strain ATCC 9150 / SARB42).